A 96-amino-acid polypeptide reads, in one-letter code: UPF0235 protein YggU (96 aa).

The protein belongs to the UPF0235 family.

This is UPF0235 protein YggU from Salmonella typhimurium (strain LT2 / SGSC1412 / ATCC 700720).